A 299-amino-acid polypeptide reads, in one-letter code: Cuticle collagen 34 (299 aa).

Residues 105–282 are disordered; that stretch reads PGPAGTPGKP…GSPGERGICP (178 aa). A compositionally biased stretch (pro residues) spans 129–162; the sequence is PGRPPQQPCEPITPPPCKPCPQGPPGPPGPPGPP. A compositionally biased stretch (low complexity) spans 164 to 181; it reads DSGEPGSPGLPGQDAAPG. Pro residues-rich tracts occupy residues 182-195 and 215-233; these read EPGP…PGAP and PGEP…PGSP. The segment at 216–278 is triple-helical region; the sequence is GEPGPPGEAG…AGPPGSPGER (63 aa). Over residues 251-263 the composition is skewed to low complexity; it reads NGPDGQPGADGNP. The span at 265–274 shows a compositional bias: pro residues; the sequence is APGPAGPPGS.

This sequence belongs to the cuticular collagen family. Collagen polypeptide chains are complexed within the cuticle by disulfide bonds and other types of covalent cross-links.

In terms of biological role, nematode cuticles are composed largely of collagen-like proteins. The cuticle functions both as an exoskeleton and as a barrier to protect the worm from its environment. The polypeptide is Cuticle collagen 34 (col-34) (Caenorhabditis elegans).